A 782-amino-acid chain; its full sequence is E3 ubiquitin-protein ligase SopA (782 aa).

Positions 137–171 (VSVSANNRPTVSEGRTPPVSPSLSLQATSSPSSPA) are disordered. Residues 157–171 (PSLSLQATSSPSSPA) show a composition bias toward low complexity. The active-site Glycyl thioester intermediate is Cys753.

It belongs to the SopA E3 ligase family. Ubiquitinated in the presence of host E1 ubiquitin-activating enzyme, E2 ubiquitin-conjugating enzyme and ubiquitin.

Its subcellular location is the secreted. The protein resides in the host cell. It carries out the reaction S-ubiquitinyl-[E2 ubiquitin-conjugating enzyme]-L-cysteine + [acceptor protein]-L-lysine = [E2 ubiquitin-conjugating enzyme]-L-cysteine + N(6)-ubiquitinyl-[acceptor protein]-L-lysine.. In terms of biological role, effector proteins function to alter host cell physiology and promote bacterial survival in host tissues. This protein is an E3 ubiquitin ligase that interferes with host's ubiquitination pathway. The polypeptide is E3 ubiquitin-protein ligase SopA (sopA) (Salmonella newport (strain SL254)).